Here is a 182-residue protein sequence, read N- to C-terminus: Transcription termination/antitermination protein NusG (182 aa).

It belongs to the NusG family.

Its function is as follows. Participates in transcription elongation, termination and antitermination. The protein is Transcription termination/antitermination protein NusG of Chlamydia trachomatis serovar D (strain ATCC VR-885 / DSM 19411 / UW-3/Cx).